The sequence spans 370 residues: UDP-N-acetylglucosamine--N-acetylmuramyl-(pentapeptide) pyrophosphoryl-undecaprenol N-acetylglucosamine transferase (370 aa).

UDP-N-acetyl-alpha-D-glucosamine-binding positions include 10 to 12 (TGG), Asn-124, Arg-166, Ser-198, Ile-252, and Gln-297.

Belongs to the glycosyltransferase 28 family. MurG subfamily.

It localises to the cell membrane. The enzyme catalyses di-trans,octa-cis-undecaprenyl diphospho-N-acetyl-alpha-D-muramoyl-L-alanyl-D-glutamyl-meso-2,6-diaminopimeloyl-D-alanyl-D-alanine + UDP-N-acetyl-alpha-D-glucosamine = di-trans,octa-cis-undecaprenyl diphospho-[N-acetyl-alpha-D-glucosaminyl-(1-&gt;4)]-N-acetyl-alpha-D-muramoyl-L-alanyl-D-glutamyl-meso-2,6-diaminopimeloyl-D-alanyl-D-alanine + UDP + H(+). The protein operates within cell wall biogenesis; peptidoglycan biosynthesis. Cell wall formation. Catalyzes the transfer of a GlcNAc subunit on undecaprenyl-pyrophosphoryl-MurNAc-pentapeptide (lipid intermediate I) to form undecaprenyl-pyrophosphoryl-MurNAc-(pentapeptide)GlcNAc (lipid intermediate II). This Finegoldia magna (strain ATCC 29328 / DSM 20472 / WAL 2508) (Peptostreptococcus magnus) protein is UDP-N-acetylglucosamine--N-acetylmuramyl-(pentapeptide) pyrophosphoryl-undecaprenol N-acetylglucosamine transferase.